We begin with the raw amino-acid sequence, 271 residues long: Phosphate import ATP-binding protein PstB (271 aa).

The 254-residue stretch at 13-266 folds into the ABC transporter domain; it reads VRTAPVSEAE…PKHPYTEAYI (254 aa). 57–64 lines the ATP pocket; it reads GPSGCGKS.

This sequence belongs to the ABC transporter superfamily. Phosphate importer (TC 3.A.1.7) family. In terms of assembly, the complex is composed of two ATP-binding proteins (PstB), two transmembrane proteins (PstC and PstA) and a solute-binding protein (PstS).

It is found in the cell inner membrane. The enzyme catalyses phosphate(out) + ATP + H2O = ADP + 2 phosphate(in) + H(+). Its function is as follows. Part of the ABC transporter complex PstSACB involved in phosphate import. Responsible for energy coupling to the transport system. This is Phosphate import ATP-binding protein PstB from Thermus thermophilus (strain ATCC 27634 / DSM 579 / HB8).